Here is a 311-residue protein sequence, read N- to C-terminus: MEATRRRQHLGATGGPGAQLGASFLQARHGSVSADEAARTAPFHLDLWFYFTLQNWVLDFGRPIAMLVFPLEWFPLNKPSVGDYFHMAYNVITPFLLLKLIERSPRTLPRSITYVSIIIFIMGASIHLVGDSVNHRLLFSGYQHHLSVRENPIIKNLKPETLIDSFELLYYYDEYLGHCMWYIPFFLILFMYFSGCFTASKAESLIPGPALLLVAPSGLYYWYLVTEGQIFILFIFTFFAMLALVLHQKRKRLFLDSNGLFLFSSFALTLLLVALWVAWLWNDPVLRKKYPGVIYVPEPWAFYTLHVSSRH.

Transmembrane regions (helical) follow at residues 56–76, 81–101, 111–131, 179–199, 204–224, 225–245, and 260–280; these read WVLD…WFPL, VGDY…LKLI, SITY…LVGD, CMWY…CFTA, SLIP…YWYL, VTEG…LALV, and LFLF…VAWL.

Interacts with CRMP2. Interacts with CLN5. Interacts with CLN3.

Its subcellular location is the endoplasmic reticulum membrane. The protein resides in the endoplasmic reticulum. In Homo sapiens (Human), this protein is Ceroid-lipofuscinosis neuronal protein 6 (CLN6).